A 120-amino-acid polypeptide reads, in one-letter code: Large ribosomal subunit protein uL22 (120 aa).

Belongs to the universal ribosomal protein uL22 family. Part of the 50S ribosomal subunit.

Its function is as follows. This protein binds specifically to 23S rRNA; its binding is stimulated by other ribosomal proteins, e.g. L4, L17, and L20. It is important during the early stages of 50S assembly. It makes multiple contacts with different domains of the 23S rRNA in the assembled 50S subunit and ribosome. In terms of biological role, the globular domain of the protein is located near the polypeptide exit tunnel on the outside of the subunit, while an extended beta-hairpin is found that lines the wall of the exit tunnel in the center of the 70S ribosome. The chain is Large ribosomal subunit protein uL22 from Corynebacterium glutamicum (strain R).